A 407-amino-acid chain; its full sequence is Carbamoyl phosphate synthase small chain (407 aa).

The CPSase stretch occupies residues 1 to 203 (MSQNESGTIA…EPCGEYEGKE (203 aa)). Positions 61, 255, and 257 each coordinate L-glutamine. The Glutamine amidotransferase type-1 domain maps to 207–405 (TVAAVDLGIK…CELMKNNSKE (199 aa)). The Nucleophile role is filled by Cys283. Positions 284, 287, 325, 327, and 328 each coordinate L-glutamine. Catalysis depends on residues His378 and Glu380.

The protein belongs to the CarA family. Composed of two chains; the small (or glutamine) chain promotes the hydrolysis of glutamine to ammonia, which is used by the large (or ammonia) chain to synthesize carbamoyl phosphate. Tetramer of heterodimers (alpha,beta)4.

The catalysed reaction is hydrogencarbonate + L-glutamine + 2 ATP + H2O = carbamoyl phosphate + L-glutamate + 2 ADP + phosphate + 2 H(+). It catalyses the reaction L-glutamine + H2O = L-glutamate + NH4(+). It functions in the pathway amino-acid biosynthesis; L-arginine biosynthesis; carbamoyl phosphate from bicarbonate: step 1/1. Its pathway is pyrimidine metabolism; UMP biosynthesis via de novo pathway; (S)-dihydroorotate from bicarbonate: step 1/3. In terms of biological role, small subunit of the glutamine-dependent carbamoyl phosphate synthetase (CPSase). CPSase catalyzes the formation of carbamoyl phosphate from the ammonia moiety of glutamine, carbonate, and phosphate donated by ATP, constituting the first step of 2 biosynthetic pathways, one leading to arginine and/or urea and the other to pyrimidine nucleotides. The small subunit (glutamine amidotransferase) binds and cleaves glutamine to supply the large subunit with the substrate ammonia. The sequence is that of Carbamoyl phosphate synthase small chain from Bifidobacterium longum (strain DJO10A).